Here is a 108-residue protein sequence, read N- to C-terminus: NADH dehydrogenase [ubiquinone] 1 alpha subcomplex subunit 8-A (108 aa).

2 consecutive CHCH domains span residues 28 to 69 (GIRC…LKDL) and 70 to 108 (HQRCPKEMDAYVGCMYYYTNEFELCRKEQEAFEKVCPLK). 3 short sequence motifs (cx9C motif) span residues 31–41 (CMPENMAFLKC), 51–61 (CLEKGRDVTRC), and 73–83 (CPKEMDAYVGC). 4 disulfide bridges follow: C31–C61, C41–C51, C73–C105, and C83–C94. Residues 94–105 (CRKEQEAFEKVC) carry the Cx10C motif motif.

Belongs to the complex I NDUFA8 subunit family. Complex I is composed of at least 49 different subunits.

It is found in the mitochondrion. Its subcellular location is the mitochondrion intermembrane space. Accessory subunit of the mitochondrial membrane respiratory chain NADH dehydrogenase (Complex I), that is believed not to be involved in catalysis. Complex I functions in the transfer of electrons from NADH to the respiratory chain. The immediate electron acceptor for the enzyme is believed to be ubiquinone. This is NADH dehydrogenase [ubiquinone] 1 alpha subcomplex subunit 8-A from Arabidopsis thaliana (Mouse-ear cress).